The sequence spans 105 residues: DNA-binding protein HU (105 aa).

This sequence belongs to the bacterial histone-like protein family.

Functionally, histone-like DNA-binding protein which is capable of wrapping DNA to stabilize it, and thus to prevent its denaturation under extreme environmental conditions. This chain is DNA-binding protein HU (hup), found in Treponema pallidum (strain Nichols).